The primary structure comprises 140 residues: Putative nickel-responsive regulator (140 aa).

Positions 81, 92, 94, and 100 each coordinate Ni(2+).

It belongs to the transcriptional regulatory CopG/NikR family. Ni(2+) is required as a cofactor.

Its function is as follows. Transcriptional regulator. In Methanothrix thermoacetophila (strain DSM 6194 / JCM 14653 / NBRC 101360 / PT) (Methanosaeta thermophila), this protein is Putative nickel-responsive regulator.